The chain runs to 164 residues: Phosphopantetheine adenylyltransferase (164 aa).

Residue Ser9 participates in substrate binding. ATP is bound by residues Ser9 to Phe10 and His17. The substrate site is built by Lys41, Leu73, and Arg87. ATP is bound by residues Gly88–Arg90, Glu98, and Tyr123–Ser129.

The protein belongs to the bacterial CoaD family. Homohexamer. Mg(2+) is required as a cofactor.

Its subcellular location is the cytoplasm. The enzyme catalyses (R)-4'-phosphopantetheine + ATP + H(+) = 3'-dephospho-CoA + diphosphate. It functions in the pathway cofactor biosynthesis; coenzyme A biosynthesis; CoA from (R)-pantothenate: step 4/5. Its function is as follows. Reversibly transfers an adenylyl group from ATP to 4'-phosphopantetheine, yielding dephospho-CoA (dPCoA) and pyrophosphate. This chain is Phosphopantetheine adenylyltransferase, found in Dictyoglomus thermophilum (strain ATCC 35947 / DSM 3960 / H-6-12).